The chain runs to 854 residues: DNA topoisomerase 1 type prokaryotic (854 aa).

The 109-residue stretch at 2–110 folds into the Toprim domain; sequence SILILLESPG…KRLRFNAITK (109 aa). Glutamate 8 and aspartate 79 together coordinate Mg(2+). One can recognise a Topo IA-type catalytic domain in the interval 124 to 610; sequence DKNLVDAQKA…DFYDKLKPIV (487 aa). The segment at 158-163 is interaction with DNA; it reads SAGRVQ. Catalysis depends on tyrosine 302, which acts as the O-(5'-phospho-DNA)-tyrosine intermediate. The interval 802-854 is disordered; sequence KSAPKGGSKTIRKPSQTKYSQTKSTKSTKSTKSTNKKFVGKSAKKTTKKTTKK. The segment covering 814 to 834 has biased composition (low complexity); that stretch reads KPSQTKYSQTKSTKSTKSTKS. Basic residues predominate over residues 835 to 854; sequence TNKKFVGKSAKKTTKKTTKK.

The protein belongs to the type IA topoisomerase family. Mg(2+) serves as cofactor.

It is found in the virion. It catalyses the reaction ATP-independent breakage of single-stranded DNA, followed by passage and rejoining.. In terms of biological role, releases the supercoiling and torsional tension of DNA, which is introduced during the DNA replication and transcription, by transiently cleaving and rejoining one strand of the DNA duplex. Introduces a single-strand break via transesterification at a target site in duplex DNA. The scissile phosphodiester is attacked by the catalytic tyrosine of the enzyme, resulting in the formation of a DNA-(5'-phosphotyrosyl)-enzyme intermediate and the expulsion of a 3'-OH DNA strand. The free DNA strand then undergoes passage around the unbroken strand, thus removing DNA supercoils. Finally, in the religation step, the DNA 3'-OH attacks the covalent intermediate to expel the active-site tyrosine and restore the DNA phosphodiester backbone. In Acanthamoeba polyphaga (Amoeba), this protein is DNA topoisomerase 1 type prokaryotic (TOP1P).